We begin with the raw amino-acid sequence, 734 residues long: Oligopeptide transporter 2 (734 aa).

Transmembrane regions (helical) follow at residues 44 to 64, 68 to 88, 125 to 145, 152 to 172, 211 to 231, 252 to 272, 283 to 303, 359 to 379, 414 to 434, 442 to 462, 525 to 545, 596 to 616, 644 to 664, and 677 to 697; these read MWFL…FFGY, PLMI…KLMA, GAGF…IMAF, FLAS…WAGI, FFVI…YLFL, LGSG…SVIA, FFAI…VIPI, FFAI…THVA, WWFY…CIFM, WWGL…VSII, MFLV…SVAW, YPAL…VWLL, ATSV…YFVF, and VLSA…YFSL.

Belongs to the oligopeptide OPT transporter (TC 2.A.67.1) family. Expressed in flowers, leaves, roots, and stems.

Its subcellular location is the membrane. Involved in the translocation of tetra- and pentapeptides across the cellular membrane in an energy-dependent manner. This Arabidopsis thaliana (Mouse-ear cress) protein is Oligopeptide transporter 2 (OPT2).